The primary structure comprises 344 residues: MFTSTGSSGLYKAPLSKSLLLVPSALSLLLALLLPHCQKLFVYDLHAVKNDFQIWRLICGRIICLDLKDTFCSSLLIYNFRIFERRYGSRKFASFLLGSWVLSALFDFLLIEAMQYFFGITAASNLPSGFLAPVFALFVPFYCSIPRVQVAQILGPLSITNKTLIYILGLQLFTSGSYIWIVAISGLMSGLCYDSKMFQVHQVLCIPSWMAKFFSWTLEPIFSSSEPTSEARIGMGATLDIQRQQRMELLDRQLMFSQFAQGRRQRQQQGGMINWNRLFPPLRQRQNVNYQGGRQSEPAAPPLEVSEEQVARLMEMGFSRGDALEALRASNNDLNVATNFLLQH.

The first 35 residues, 1 to 35 (MFTSTGSSGLYKAPLSKSLLLVPSALSLLLALLLP), serve as a signal peptide directing secretion. The Extracellular segment spans residues 36 to 91 (HCQKLFVYDLHAVKNDFQIWRLICGRIICLDLKDTFCSSLLIYNFRIFERRYGSRK). The chain crosses the membrane as a helical span at residues 92 to 112 (FASFLLGSWVLSALFDFLLIE). The Cytoplasmic segment spans residues 113–125 (AMQYFFGITAASN). The chain crosses the membrane as a helical span at residues 126 to 146 (LPSGFLAPVFALFVPFYCSIP). Residues 147 to 163 (RVQVAQILGPLSITNKT) lie on the Extracellular side of the membrane. An N-linked (GlcNAc...) asparagine glycan is attached at Asn161. Residues 164–184 (LIYILGLQLFTSGSYIWIVAI) traverse the membrane as a helical segment. At 185 to 344 (SGLMSGLCYD…NVATNFLLQH (160 aa)) the chain is on the cytoplasmic side. Residues 304-344 (EVSEEQVARLMEMGFSRGDALEALRASNNDLNVATNFLLQH) form the UBA domain.

As to quaternary structure, interacts with FAF2. Interacts with LMBR1L. Interacts with AMFR and VCP.

Its subcellular location is the endoplasmic reticulum membrane. Restricts trafficking of FAF2 from the endoplasmic reticulum to lipid droplets. In association with LMBR1L and E3 ubiquitin-protein ligase AMFR, negatively regulates the canonical Wnt signaling pathway in the lymphocytes by promoting the ubiquitin-mediated degradation of CTNNB1 and Wnt receptors FZD6 and LRP6. This is Ubiquitin-associated domain-containing protein 2 (UBAC2) from Homo sapiens (Human).